We begin with the raw amino-acid sequence, 454 residues long: Bifunctional protein GlmU (454 aa).

The tract at residues 1–226 is pyrophosphorylase; sequence MALNVVILAA…AIEVEGANNR (226 aa). UDP-N-acetyl-alpha-D-glucosamine is bound by residues 8 to 11, Lys-22, Gln-73, 78 to 79, 100 to 102, Gly-137, Glu-151, Asn-166, and Asn-224; these read LAAG, GT, and YGD. Residue Asp-102 coordinates Mg(2+). Mg(2+) is bound at residue Asn-224. Residues 227–247 form a linker region; sequence VQLAQLERAYQAREAEKLMIA. The interval 248–454 is N-acetyltransferase; sequence GANLRDPSRI…GWQRPVKIKK (207 aa). Residues Arg-330 and Lys-348 each coordinate UDP-N-acetyl-alpha-D-glucosamine. The Proton acceptor role is filled by His-360. UDP-N-acetyl-alpha-D-glucosamine is bound by residues Tyr-363 and Asn-374. Residues Ala-377, 383–384, Ser-402, Ala-420, and Arg-437 each bind acetyl-CoA; that span reads NY.

This sequence in the N-terminal section; belongs to the N-acetylglucosamine-1-phosphate uridyltransferase family. In the C-terminal section; belongs to the transferase hexapeptide repeat family. In terms of assembly, homotrimer. Requires Mg(2+) as cofactor.

The protein resides in the cytoplasm. The enzyme catalyses alpha-D-glucosamine 1-phosphate + acetyl-CoA = N-acetyl-alpha-D-glucosamine 1-phosphate + CoA + H(+). It catalyses the reaction N-acetyl-alpha-D-glucosamine 1-phosphate + UTP + H(+) = UDP-N-acetyl-alpha-D-glucosamine + diphosphate. It participates in nucleotide-sugar biosynthesis; UDP-N-acetyl-alpha-D-glucosamine biosynthesis; N-acetyl-alpha-D-glucosamine 1-phosphate from alpha-D-glucosamine 6-phosphate (route II): step 2/2. Its pathway is nucleotide-sugar biosynthesis; UDP-N-acetyl-alpha-D-glucosamine biosynthesis; UDP-N-acetyl-alpha-D-glucosamine from N-acetyl-alpha-D-glucosamine 1-phosphate: step 1/1. It functions in the pathway bacterial outer membrane biogenesis; LPS lipid A biosynthesis. Its function is as follows. Catalyzes the last two sequential reactions in the de novo biosynthetic pathway for UDP-N-acetylglucosamine (UDP-GlcNAc). The C-terminal domain catalyzes the transfer of acetyl group from acetyl coenzyme A to glucosamine-1-phosphate (GlcN-1-P) to produce N-acetylglucosamine-1-phosphate (GlcNAc-1-P), which is converted into UDP-GlcNAc by the transfer of uridine 5-monophosphate (from uridine 5-triphosphate), a reaction catalyzed by the N-terminal domain. The protein is Bifunctional protein GlmU of Shewanella sp. (strain MR-4).